A 325-amino-acid polypeptide reads, in one-letter code: MTAPLVLAVPSKGRLQENAEAFFARAGLTLAKPRGVRDYRGTIAELDNVEIAYLSASEIASQLARGMVHLGVTGEDLIRESIVDADKRVALIDGLGFGSANVVVAVPQSWIDVRTMADLDDVTIGFRAQHNRRMRVATKYINLTRVFFASHGVVDYRIVESAGATEGAPAVGTAEMIVDITTTGATLAANGLKVLDDGVILRSQANLVASRDADWSNGARETARIILDHIAARARANQYREVRTRFTGCDTTLLAEAHDRFGVVSPFGGPTSSGMVTLHCPPDRLYALGSFLRQHGAETVSIASLDYVFDRENPLFVRLEAFLRP.

Belongs to the ATP phosphoribosyltransferase family. Long subfamily. Requires Mg(2+) as cofactor.

The protein localises to the cytoplasm. It carries out the reaction 1-(5-phospho-beta-D-ribosyl)-ATP + diphosphate = 5-phospho-alpha-D-ribose 1-diphosphate + ATP. It participates in amino-acid biosynthesis; L-histidine biosynthesis; L-histidine from 5-phospho-alpha-D-ribose 1-diphosphate: step 1/9. Feedback inhibited by histidine. In terms of biological role, catalyzes the condensation of ATP and 5-phosphoribose 1-diphosphate to form N'-(5'-phosphoribosyl)-ATP (PR-ATP). Has a crucial role in the pathway because the rate of histidine biosynthesis seems to be controlled primarily by regulation of HisG enzymatic activity. This Nitrobacter hamburgensis (strain DSM 10229 / NCIMB 13809 / X14) protein is ATP phosphoribosyltransferase.